A 179-amino-acid chain; its full sequence is Large ribosomal subunit protein uL5 (179 aa).

This sequence belongs to the universal ribosomal protein uL5 family. In terms of assembly, part of the 50S ribosomal subunit; part of the 5S rRNA/L5/L18/L25 subcomplex. Contacts the 5S rRNA and the P site tRNA. Forms a bridge to the 30S subunit in the 70S ribosome.

Its function is as follows. This is one of the proteins that bind and probably mediate the attachment of the 5S RNA into the large ribosomal subunit, where it forms part of the central protuberance. In the 70S ribosome it contacts protein S13 of the 30S subunit (bridge B1b), connecting the 2 subunits; this bridge is implicated in subunit movement. Contacts the P site tRNA; the 5S rRNA and some of its associated proteins might help stabilize positioning of ribosome-bound tRNAs. This chain is Large ribosomal subunit protein uL5, found in Chromohalobacter salexigens (strain ATCC BAA-138 / DSM 3043 / CIP 106854 / NCIMB 13768 / 1H11).